The primary structure comprises 179 residues: Nuclear transcription factor Y subunit B (179 aa).

Residues 1-32 (MAEAPASPGGGGGSHESGSPRGGGGGGSVREQ) are disordered. Over residues 8–28 (PGGGGGSHESGSPRGGGGGGS) the composition is skewed to gly residues. Residues 36–42 (LPIANIS) mediate DNA binding. The interval 63-74 (VQECVSEFISFI) is subunit association domain (SAD). Residues 147 to 179 (SSSAAEGMGQQGAYNQGMGYMQPQYHNGDISNV) are disordered.

The protein belongs to the NFYB/HAP3 subunit family. As to quaternary structure, heterotrimeric transcription factor composed of three components, NF-YA, NF-YB and NF-YC. NF-YB and NF-YC must interact and dimerize for NF-YA association and DNA binding.

Its subcellular location is the nucleus. Its function is as follows. Component of the NF-Y/HAP transcription factor complex. The NF-Y complex stimulates the transcription of various genes by recognizing and binding to a CCAAT motif in promoters. This Zea mays (Maize) protein is Nuclear transcription factor Y subunit B (NFY2).